The primary structure comprises 249 residues: Phosphoribosylaminoimidazole-succinocarboxamide synthase (249 aa).

This sequence belongs to the SAICAR synthetase family.

The catalysed reaction is 5-amino-1-(5-phospho-D-ribosyl)imidazole-4-carboxylate + L-aspartate + ATP = (2S)-2-[5-amino-1-(5-phospho-beta-D-ribosyl)imidazole-4-carboxamido]succinate + ADP + phosphate + 2 H(+). It functions in the pathway purine metabolism; IMP biosynthesis via de novo pathway; 5-amino-1-(5-phospho-D-ribosyl)imidazole-4-carboxamide from 5-amino-1-(5-phospho-D-ribosyl)imidazole-4-carboxylate: step 1/2. The protein is Phosphoribosylaminoimidazole-succinocarboxamide synthase of Chloroflexus aurantiacus (strain ATCC 29366 / DSM 635 / J-10-fl).